The primary structure comprises 342 residues: N-acetyl-gamma-glutamyl-phosphate reductase (342 aa).

The active site involves C146.

Belongs to the NAGSA dehydrogenase family. Type 1 subfamily.

The protein resides in the cytoplasm. It carries out the reaction N-acetyl-L-glutamate 5-semialdehyde + phosphate + NADP(+) = N-acetyl-L-glutamyl 5-phosphate + NADPH + H(+). The protein operates within amino-acid biosynthesis; L-arginine biosynthesis; N(2)-acetyl-L-ornithine from L-glutamate: step 3/4. Its function is as follows. Catalyzes the NADPH-dependent reduction of N-acetyl-5-glutamyl phosphate to yield N-acetyl-L-glutamate 5-semialdehyde. This is N-acetyl-gamma-glutamyl-phosphate reductase from Saccharopolyspora erythraea (strain ATCC 11635 / DSM 40517 / JCM 4748 / NBRC 13426 / NCIMB 8594 / NRRL 2338).